We begin with the raw amino-acid sequence, 700 residues long: Polyribonucleotide nucleotidyltransferase (700 aa).

2 residues coordinate Mg(2+): aspartate 485 and aspartate 491. In terms of domain architecture, KH spans 552-611; it reads PRITVIKINPEKIRDVIGKGGAVIRALTEETGTTIELEDDGTVKIASSNGEATKEAIRRI. In terms of domain architecture, S1 motif spans 621 to 689; it reads GRIYNGKVIR…RQGRVRLSIK (69 aa).

Belongs to the polyribonucleotide nucleotidyltransferase family. As to quaternary structure, component of the RNA degradosome, which is a multiprotein complex involved in RNA processing and mRNA degradation. Requires Mg(2+) as cofactor.

It is found in the cytoplasm. It catalyses the reaction RNA(n+1) + phosphate = RNA(n) + a ribonucleoside 5'-diphosphate. Involved in mRNA degradation. Catalyzes the phosphorolysis of single-stranded polyribonucleotides processively in the 3'- to 5'-direction. The sequence is that of Polyribonucleotide nucleotidyltransferase from Shewanella baltica (strain OS185).